The primary structure comprises 324 residues: UDP-N-acetylenolpyruvoylglucosamine reductase (324 aa).

The FAD-binding PCMH-type domain maps to 36-217; sequence FRAGGLAELM…IRAEMDAVRA (182 aa). Arg183 is an active-site residue. Catalysis depends on Ser232, which acts as the Proton donor. Glu302 is an active-site residue.

This sequence belongs to the MurB family. FAD is required as a cofactor.

It localises to the cytoplasm. The enzyme catalyses UDP-N-acetyl-alpha-D-muramate + NADP(+) = UDP-N-acetyl-3-O-(1-carboxyvinyl)-alpha-D-glucosamine + NADPH + H(+). Its pathway is cell wall biogenesis; peptidoglycan biosynthesis. Its function is as follows. Cell wall formation. The chain is UDP-N-acetylenolpyruvoylglucosamine reductase from Rhizobium rhizogenes (strain K84 / ATCC BAA-868) (Agrobacterium radiobacter).